Here is a 680-residue protein sequence, read N- to C-terminus: Lipase 1 (680 aa).

An N-terminal signal peptide occupies residues 1–34; the sequence is MKSQNKYSIRKFSVGASSILIATLLFLSGGQAQA. Residues 35 to 290 constitute a propeptide that is removed on maturation; it reads AEKQVNMGNS…AKAKDDQTNK (256 aa). The tract at residues 82–259 is disordered; sequence KNLHNDKTIS…PTKDNDKKNG (178 aa). Positions 84–112 are enriched in basic and acidic residues; it reads LHNDKTISEENHRKTDDLNKDQLKDDKKS. Over residues 125 to 138 the composition is skewed to polar residues; the sequence is KNNNANPSDVNQGL. Positions 148-170 are enriched in low complexity; the sequence is SKVASQQQSKEADNSQDSNANNN. Residues 204–223 are compositionally biased toward polar residues; sequence QPQQNNQANDKITNYNFNNE. Residues 224 to 234 show a composition bias toward basic and acidic residues; that stretch reads QEVKPQKDEKT. Positions 235–246 are enriched in polar residues; that stretch reads LSVSDLKNNQKS. Ser-408 functions as the Nucleophile in the catalytic mechanism. Catalysis depends on Asp-600, which acts as the Charge relay system. Asp-638 contributes to the Ca(2+) binding site. The Charge relay system role is filled by His-639. The Ca(2+) site is built by Asp-641, Asp-646, and Asp-649.

It belongs to the AB hydrolase superfamily. Lipase family.

It localises to the secreted. The enzyme catalyses a triacylglycerol + H2O = a diacylglycerol + a fatty acid + H(+). In Staphylococcus aureus (strain MSSA476), this protein is Lipase 1 (lip1).